Consider the following 85-residue polypeptide: MKLTCVLIITVLFLTACQLTAAGNSRDKQEDPVVRSSGEVQRSEDIKLAKRCLESGSLCFAGYGHSSCCSGACLDYGGLGVGACR.

The signal sequence occupies residues 1–22 (MKLTCVLIITVLFLTACQLTAA). A propeptide spanning residues 23–49 (GNSRDKQEDPVVRSSGEVQRSEDIKLA) is cleaved from the precursor. Intrachain disulfides connect C52–C69, C59–C73, and C68–C84.

The protein belongs to the conotoxin O1 superfamily. In terms of tissue distribution, expressed by the venom duct.

The protein localises to the secreted. In terms of biological role, produces no obvious effect on ionic currents when tested on the mouse dorsal rooted ganglia (DRG). The chain is Conotoxin MaIr94 from Conus marmoreus (Marble cone).